The sequence spans 1136 residues: Probable RNA-dependent RNA polymerase 2 (1136 aa).

Residues 965-989 form a disordered region; it reads SGDSGALSSSSAQPSPTYDPDLEVP. Residues 967-980 are compositionally biased toward low complexity; that stretch reads DSGALSSSSAQPSP.

It belongs to the RdRP family.

The catalysed reaction is RNA(n) + a ribonucleoside 5'-triphosphate = RNA(n+1) + diphosphate. Probably involved in the RNA silencing pathway and required for the generation of small interfering RNAs (siRNAs). The chain is Probable RNA-dependent RNA polymerase 2 (RDR2) from Oryza sativa subsp. japonica (Rice).